Reading from the N-terminus, the 621-residue chain is Chaperone protein HscA homolog (621 aa).

It belongs to the heat shock protein 70 family.

Its function is as follows. Chaperone involved in the maturation of iron-sulfur cluster-containing proteins. Has a low intrinsic ATPase activity which is markedly stimulated by HscB. This chain is Chaperone protein HscA homolog, found in Azotobacter vinelandii (strain DJ / ATCC BAA-1303).